We begin with the raw amino-acid sequence, 475 residues long: Bifunctional purple acid phosphatase 26 (475 aa).

An N-terminal signal peptide occupies residues 1–30 (MNHLVIISVFLSSVLLLYRGESGITSSFIR). Asn103 carries N-linked (GlcNAc...) asparagine glycosylation. Fe cation-binding residues include Asp162, Asp189, and Tyr192. A Zn(2+)-binding site is contributed by Asp189. Residues Asn227 and His312 each contribute to the Zn(2+) site. Asn227 contributes to the substrate binding site. The Proton donor role is filled by His322. Residue His349 participates in Zn(2+) binding. A substrate-binding site is contributed by 349–351 (HVH). Fe cation is bound at residue His351. 2 N-linked (GlcNAc...) asparagine glycosylation sites follow: Asn365 and Asn422.

It belongs to the metallophosphoesterase superfamily. Purple acid phosphatase family. In terms of assembly, homodimer. It depends on Fe cation as a cofactor. Zn(2+) is required as a cofactor. In terms of processing, glycosylated. As to expression, expressed in roots, stems, leaves, flowers and siliques.

It localises to the vacuole. The catalysed reaction is a phosphate monoester + H2O = an alcohol + phosphate. The enzyme catalyses 2 a phenolic donor + H2O2 = 2 a phenolic radical donor + 2 H2O. With respect to regulation, activated by Mg(2+), Co(2+), Mn(2+) and Ba(2+). Inhibited by Fe(2+), Cu(2+), Zn(2+), NaF, molybdate, arsenate, vanadate and inorganic phosphate. No effect of tartrate, Asp, Gln, glutathione, Asn, ascorbic acid and phosphite. Its function is as follows. Metallo-phosphoesterase involved in phosphate metabolism. Acid phosphatase activity with phosphoenolpyruvate, inorganic pyrophosphate, phenyl-phosphate and p-nitrophenyl-phosphate as the most effective substrates. No activity with phytic acid, phosphocholine or bis-p-nitrophenyl-phosphate. Has a peroxidase activity at alkaline pH. This chain is Bifunctional purple acid phosphatase 26 (PAP26), found in Arabidopsis thaliana (Mouse-ear cress).